We begin with the raw amino-acid sequence, 421 residues long: Probable N-acetylgalactosaminyltransferase 8 (421 aa).

Over 1 to 3 (MRR) the chain is Cytoplasmic. The helical; Signal-anchor for type II membrane protein transmembrane segment at 4-24 (HVVLSIFVFAGIVFAAEEAEK) threads the bilayer. The Lumenal portion of the chain corresponds to 25-421 (LPKCEHVDPY…ELEPKVHDEL (397 aa)). Residues N52 and N58 are each glycosylated (N-linked (GlcNAc...) asparagine). Cystine bridges form between C98–C331 and C322–C399. Residues 106–219 (SYSTSVVVIH…ERWLEPLLQP (114 aa)) are catalytic subdomain A. Substrate contacts are provided by D147 and R180. D203 contributes to the Mn(2+) binding site. Residue S204 participates in substrate binding. H205 is a binding site for Mn(2+). Residues 277–339 (PFNSPAMPGG…PCSRVGHVFR (63 aa)) are catalytic subdomain B. W308 serves as a coordination point for substrate. Position 336 (H336) interacts with Mn(2+). 2 residues coordinate substrate: R339 and Y344. The short motif at 418–421 (HDEL) is the Prevents secretion from ER element.

It belongs to the glycosyltransferase 2 family. GalNAc-T subfamily. Requires Mn(2+) as cofactor.

It is found in the golgi apparatus membrane. The protein operates within protein modification; protein glycosylation. In terms of biological role, potential glycopeptide transferase involved in O-linked oligosaccharide biosynthesis. In contrast to other members of the family, it does not act as a peptide transferase that transfers GalNAc onto serine or threonine residue on peptides that have been tested. Some peptide transferase activity is however not excluded, considering that its appropriate peptide substrate may remain unidentified. In Caenorhabditis elegans, this protein is Probable N-acetylgalactosaminyltransferase 8 (gly-8).